The chain runs to 155 residues: MRLTIVAVGQKVPDWAQTAYDDYAKRFPPELKVELKAVKTEPRGSKTLENLLAAERTRIEGAIARGCRIVALDERGTAVTTMALAEHLKNWQLSGDDVAIVIGGPDGLDAGFKQSAHQRIRLSDLTLPHAMVRVLLIEQLYRAWSITINHPYHRE.

S-adenosyl-L-methionine is bound by residues Leu-72, Gly-103, and 122 to 127 (LSDLTL).

This sequence belongs to the RNA methyltransferase RlmH family. Homodimer.

Its subcellular location is the cytoplasm. It catalyses the reaction pseudouridine(1915) in 23S rRNA + S-adenosyl-L-methionine = N(3)-methylpseudouridine(1915) in 23S rRNA + S-adenosyl-L-homocysteine + H(+). Its function is as follows. Specifically methylates the pseudouridine at position 1915 (m3Psi1915) in 23S rRNA. The polypeptide is Ribosomal RNA large subunit methyltransferase H (Polaromonas naphthalenivorans (strain CJ2)).